We begin with the raw amino-acid sequence, 334 residues long: Protein-methionine-sulfoxide reductase catalytic subunit MsrP (334 aa).

A signal peptide (tat-type signal) is located at residues 1–44; sequence MKKKQFLKESDVTAESVFFMKRRQVLKALGISAAALSLPHAAHA. Residues N88, 91 to 92, C146, T181, N233, R238, and 249 to 251 each bind Mo-molybdopterin; these read YE and GIK.

This sequence belongs to the MsrP family. Heterodimer of a catalytic subunit (MsrP) and a heme-binding subunit (MsrQ). Requires Mo-molybdopterin as cofactor. In terms of processing, predicted to be exported by the Tat system. The position of the signal peptide cleavage has not been experimentally proven.

Its subcellular location is the periplasm. The enzyme catalyses L-methionyl-[protein] + a quinone + H2O = L-methionyl-(S)-S-oxide-[protein] + a quinol. The catalysed reaction is L-methionyl-[protein] + a quinone + H2O = L-methionyl-(R)-S-oxide-[protein] + a quinol. In terms of biological role, part of the MsrPQ system that repairs oxidized periplasmic proteins containing methionine sulfoxide residues (Met-O), using respiratory chain electrons. Thus protects these proteins from oxidative-stress damage caused by reactive species of oxygen and chlorine generated by the host defense mechanisms. MsrPQ is essential for the maintenance of envelope integrity under bleach stress, rescuing a wide series of structurally unrelated periplasmic proteins from methionine oxidation, including the primary periplasmic chaperone SurA and the lipoprotein Pal. The catalytic subunit MsrP is non-stereospecific, being able to reduce both (R-) and (S-) diastereoisomers of methionine sulfoxide. This Escherichia coli O139:H28 (strain E24377A / ETEC) protein is Protein-methionine-sulfoxide reductase catalytic subunit MsrP.